Here is a 474-residue protein sequence, read N- to C-terminus: Stabilizer of axonemal microtubules 1 (474 aa).

Mn stretches follow at residues 30–64 (KPCLLSEYTENYPFYHSYLPRESFKPRREYQKGPI), 65–97 (PMEGLTTSRRDFGPHKVAPVKVHQYDQFVPSEE), 98–131 (NMDLLTTYKKDYNPYPVCRVDPIKPRDSKYPCSD), 132–165 (KMECLPTYKADYLPWNQPRREPLRLEHKYQPASV), 166–199 (RFDNRTTHQDDYPIKGLVKTISCKPLAMPKLCNI), 200–232 (PLEDVTNYKMSYVAHPVEKRFVHEAEKFRPCEI), 233–266 (PFESLTTQKQSYRGLMGEPAKSLKPLARPPGLDM), 267–299 (PFCNTTEFRDKYQAWPMPRMFSKAPITYVPPED), 300–332 (RMDLLTTVQAHYTCPKGAPAQSCRPALQIKKCG), 333–366 (RFEGSSTTKDDYKQWSSMRTEPVKPVPQLDLPTE), 367–400 (PLDCLTTTRAHYVPHLPINTKSCKPHWSGPRGNV), and 401–434 (PVESQTTYTISFTPKEMGRCLASYPEPPGYTFEE). The segment at 446 to 474 (VSQAGSQQSSHLSVDDSENPNQRELEVLA) is disordered. Over residues 448 to 457 (QAGSQQSSHL) the composition is skewed to polar residues.

It belongs to the FAM154 family. In terms of assembly, associates with microtubules via the Mn regions. In terms of tissue distribution, widely expressed, with highest levels in testis. Expressed in mature spermatozoa (at protein level).

It is found in the cytoplasm. Its subcellular location is the cytoskeleton. The protein localises to the microtubule organizing center. It localises to the centrosome. The protein resides in the centriole. It is found in the cilium basal body. Its subcellular location is the cilium axoneme. The protein localises to the flagellum axoneme. Functionally, may play a role in the regulation of cilium length. Stabilizes microtubules at low temperature. The chain is Stabilizer of axonemal microtubules 1 (SAXO1) from Homo sapiens (Human).